The sequence spans 301 residues: Protoheme IX farnesyltransferase 1 (301 aa).

The next 9 membrane-spanning stretches (helical) occupy residues 29-49 (VVAL…PTAV), 51-71 (VQPL…AAAL), 101-121 (ALIF…VLVN), 123-143 (LTAW…TAYL), 150-170 (NIVI…TAVT), 177-197 (ALLL…ALAI), 223-243 (CILL…LVGM), 244-264 (CGPM…YKAW), and 281-301 (FSIY…YLWS).

It belongs to the UbiA prenyltransferase family. Protoheme IX farnesyltransferase subfamily.

Its subcellular location is the cell inner membrane. It carries out the reaction heme b + (2E,6E)-farnesyl diphosphate + H2O = Fe(II)-heme o + diphosphate. It functions in the pathway porphyrin-containing compound metabolism; heme O biosynthesis; heme O from protoheme: step 1/1. In terms of biological role, converts heme B (protoheme IX) to heme O by substitution of the vinyl group on carbon 2 of heme B porphyrin ring with a hydroxyethyl farnesyl side group. The polypeptide is Protoheme IX farnesyltransferase 1 (Shewanella putrefaciens (strain CN-32 / ATCC BAA-453)).